The following is a 79-amino-acid chain: MRSQHVLILLLGLVCASQVLGKHLTKVKAKALHYDKRGDCDWPTGVCFYIHDPCPPGLRRCPQHDDGCYLPTNHCCCYP.

Residues 1–21 (MRSQHVLILLLGLVCASQVLG) form the signal peptide. Positions 22-35 (KHLTKVKAKALHYD) are excised as a propeptide.

This sequence belongs to the Cnidaria small cysteine-rich protein (SCRiP) family. delta subfamily. In terms of processing, contains 4 disulfide bonds.

It is found in the secreted. The protein resides in the nematocyst. Its function is as follows. This recombinant protein induces severe neurotoxicity on zebrafish larvae (Danio rerio) at a concentration of 230 mg/ml, but does not show toxicity when injected in blowfly larvae (Sarcophaga falculata). All fish incubated with this protein died within 200 minutes of exposure. Has also been claimed to be implied in calcification, but this function seems improbable. This is Small cysteine-rich protein 2 from Acropora millepora (Staghorn coral).